A 264-amino-acid chain; its full sequence is MKKLKLHGFNNLTKSLSFCIYDICYAKTAEERDGYIAYIDELYNANRLTEILSETCSIIGANILNIARQDYEPQGASVTILVSEEPIDPKLIDQTEHPGPLPETVVAHLDKSHICVHTYPESHPEGGLCTFRADIEVSTCGVISPLKALNYLIHQLESDIVTIDYRVRGFTRDVNGMKHFIDHEINSIQNFMSEDMKSLYDMVDVNVYQENIFHTKMLLKEFDLKHYMFHTKPEDLTETERQQITAALWKEMREIYYGRNISAV.

Ser112 serves as the catalytic Schiff-base intermediate with substrate; via pyruvic acid. Ser112 carries the pyruvic acid (Ser); by autocatalysis modification. Residue His117 is the Proton acceptor; for processing activity of the active site. Cys140 (proton donor; for catalytic activity) is an active-site residue.

It belongs to the prokaryotic AdoMetDC family. Type 2 subfamily. As to quaternary structure, heterooctamer of four alpha and four beta chains arranged as a tetramer of alpha/beta heterodimers. It depends on pyruvate as a cofactor. In terms of processing, is synthesized initially as an inactive proenzyme. Formation of the active enzyme involves a self-maturation process in which the active site pyruvoyl group is generated from an internal serine residue via an autocatalytic post-translational modification. Two non-identical subunits are generated from the proenzyme in this reaction, and the pyruvate is formed at the N-terminus of the alpha chain, which is derived from the carboxyl end of the proenzyme. The post-translation cleavage follows an unusual pathway, termed non-hydrolytic serinolysis, in which the side chain hydroxyl group of the serine supplies its oxygen atom to form the C-terminus of the beta chain, while the remainder of the serine residue undergoes an oxidative deamination to produce ammonia and the pyruvoyl group blocking the N-terminus of the alpha chain.

The enzyme catalyses S-adenosyl-L-methionine + H(+) = S-adenosyl 3-(methylsulfanyl)propylamine + CO2. It participates in amine and polyamine biosynthesis; S-adenosylmethioninamine biosynthesis; S-adenosylmethioninamine from S-adenosyl-L-methionine: step 1/1. In terms of biological role, catalyzes the decarboxylation of S-adenosylmethionine to S-adenosylmethioninamine (dcAdoMet), the propylamine donor required for the synthesis of the polyamines spermine and spermidine from the diamine putrescine. This Salmonella typhi protein is S-adenosylmethionine decarboxylase proenzyme.